Here is a 1201-residue protein sequence, read N- to C-terminus: ATP-dependent helicase/deoxyribonuclease subunit B (1201 aa).

Belongs to the helicase family. AddB/RexB type 2 subfamily. As to quaternary structure, heterodimer of AddA and RexB. Mg(2+) serves as cofactor.

In terms of biological role, the heterodimer acts as both an ATP-dependent DNA helicase and an ATP-dependent, dual-direction single-stranded exonuclease. Recognizes the chi site generating a DNA molecule suitable for the initiation of homologous recombination. This subunit has 5' -&gt; 3' nuclease activity but not helicase activity. This is ATP-dependent helicase/deoxyribonuclease subunit B from Levilactobacillus brevis (strain ATCC 367 / BCRC 12310 / CIP 105137 / JCM 1170 / LMG 11437 / NCIMB 947 / NCTC 947) (Lactobacillus brevis).